A 211-amino-acid polypeptide reads, in one-letter code: Beta-crystallin B3 (211 aa).

At methionine 1 the chain carries N-acetylmethionine. N-acetylalanine; in Beta-crystallin B3, N-terminally processed is present on alanine 2. An N-terminal arm region spans residues 2–23; it reads AEQHGAPEQAAASKSHGGLGGS. 2 consecutive Beta/gamma crystallin 'Greek key' domains span residues 24 to 63 and 64 to 108; these read YKVTVYELENFQGKRCELSAECPNLTESLLQKVGSIQVES and GPWL…RPLH. The interval 109-113 is connecting peptide; that stretch reads IDGPD. Beta/gamma crystallin 'Greek key' domains lie at 114 to 155 and 156 to 198; these read HKLH…RVIN and GTWV…RRIR. Residues 200 to 211 are C-terminal arm; the sequence is QKWHKRGCFLSS.

This sequence belongs to the beta/gamma-crystallin family. Homo/heterodimer, or complexes of higher-order. The structure of beta-crystallin oligomers seems to be stabilized through interactions between the N-terminal arms.

Its function is as follows. Crystallins are the dominant structural components of the vertebrate eye lens. The protein is Beta-crystallin B3 (Crybb3) of Rattus norvegicus (Rat).